A 452-amino-acid chain; its full sequence is UDP-N-acetylmuramoylalanine--D-glutamate ligase (452 aa).

113–119 contributes to the ATP binding site; the sequence is GTNGKTT.

This sequence belongs to the MurCDEF family.

The protein resides in the cytoplasm. It catalyses the reaction UDP-N-acetyl-alpha-D-muramoyl-L-alanine + D-glutamate + ATP = UDP-N-acetyl-alpha-D-muramoyl-L-alanyl-D-glutamate + ADP + phosphate + H(+). The protein operates within cell wall biogenesis; peptidoglycan biosynthesis. Functionally, cell wall formation. Catalyzes the addition of glutamate to the nucleotide precursor UDP-N-acetylmuramoyl-L-alanine (UMA). This chain is UDP-N-acetylmuramoylalanine--D-glutamate ligase (murD), found in Synechocystis sp. (strain ATCC 27184 / PCC 6803 / Kazusa).